Here is a 96-residue protein sequence, read N- to C-terminus: Small ribosomal subunit protein bS18 (96 aa).

It belongs to the bacterial ribosomal protein bS18 family. Part of the 30S ribosomal subunit. Forms a tight heterodimer with protein bS6.

Its function is as follows. Binds as a heterodimer with protein bS6 to the central domain of the 16S rRNA, where it helps stabilize the platform of the 30S subunit. The protein is Small ribosomal subunit protein bS18 of Borrelia garinii subsp. bavariensis (strain ATCC BAA-2496 / DSM 23469 / PBi) (Borreliella bavariensis).